The following is a 371-amino-acid chain: UDP-N-acetylglucosamine--N-acetylmuramyl-(pentapeptide) pyrophosphoryl-undecaprenol N-acetylglucosamine transferase (371 aa).

UDP-N-acetyl-alpha-D-glucosamine contacts are provided by residues 15-17 (TGG), Asn126, Arg172, Ser199, Ile256, 275-280 (ALTVSE), and Gln301.

The protein belongs to the glycosyltransferase 28 family. MurG subfamily.

The protein resides in the cell inner membrane. The catalysed reaction is di-trans,octa-cis-undecaprenyl diphospho-N-acetyl-alpha-D-muramoyl-L-alanyl-D-glutamyl-meso-2,6-diaminopimeloyl-D-alanyl-D-alanine + UDP-N-acetyl-alpha-D-glucosamine = di-trans,octa-cis-undecaprenyl diphospho-[N-acetyl-alpha-D-glucosaminyl-(1-&gt;4)]-N-acetyl-alpha-D-muramoyl-L-alanyl-D-glutamyl-meso-2,6-diaminopimeloyl-D-alanyl-D-alanine + UDP + H(+). Its pathway is cell wall biogenesis; peptidoglycan biosynthesis. In terms of biological role, cell wall formation. Catalyzes the transfer of a GlcNAc subunit on undecaprenyl-pyrophosphoryl-MurNAc-pentapeptide (lipid intermediate I) to form undecaprenyl-pyrophosphoryl-MurNAc-(pentapeptide)GlcNAc (lipid intermediate II). The sequence is that of UDP-N-acetylglucosamine--N-acetylmuramyl-(pentapeptide) pyrophosphoryl-undecaprenol N-acetylglucosamine transferase from Francisella philomiragia subsp. philomiragia (strain ATCC 25017 / CCUG 19701 / FSC 153 / O#319-036).